The sequence spans 161 residues: MKYDTSDLCDIYHEEVNVVEPLFSNFGGRTSFGGKITTVKCFEDNGLLFDLLEENGLGRVLVVDGGGSVRRALINAELAELALKNEWEGIVVYGAVRQVDDLAELDIGIQAMAAIPVGAADEGVGESDIRVNFGGVTFFSGDHLYADNTGIILSEDPLDIE.

The protein belongs to the RraA family. Homotrimer. Binds to both RNA-binding sites in the C-terminal region of Rne and to RhlB.

The protein localises to the cytoplasm. Its function is as follows. Globally modulates RNA abundance by binding to RNase E (Rne) and regulating its endonucleolytic activity. Can modulate Rne action in a substrate-dependent manner by altering the composition of the degradosome. Modulates RNA-binding and helicase activities of the degradosome. This Yersinia pseudotuberculosis serotype O:1b (strain IP 31758) protein is Regulator of ribonuclease activity A.